Reading from the N-terminus, the 656-residue chain is UvrABC system protein B (656 aa).

The 386-residue stretch at K29–Q414 folds into the Helicase ATP-binding domain. G42–T49 is an ATP binding site. The Beta-hairpin motif lies at Y95–V118. One can recognise a Helicase C-terminal domain in the interval Q434–L596. The UVR domain maps to A614–E649.

Belongs to the UvrB family. As to quaternary structure, forms a heterotetramer with UvrA during the search for lesions. Interacts with UvrC in an incision complex.

The protein localises to the cytoplasm. Functionally, the UvrABC repair system catalyzes the recognition and processing of DNA lesions. A damage recognition complex composed of 2 UvrA and 2 UvrB subunits scans DNA for abnormalities. Upon binding of the UvrA(2)B(2) complex to a putative damaged site, the DNA wraps around one UvrB monomer. DNA wrap is dependent on ATP binding by UvrB and probably causes local melting of the DNA helix, facilitating insertion of UvrB beta-hairpin between the DNA strands. Then UvrB probes one DNA strand for the presence of a lesion. If a lesion is found the UvrA subunits dissociate and the UvrB-DNA preincision complex is formed. This complex is subsequently bound by UvrC and the second UvrB is released. If no lesion is found, the DNA wraps around the other UvrB subunit that will check the other stand for damage. This chain is UvrABC system protein B, found in Mycoplasma genitalium (strain ATCC 33530 / DSM 19775 / NCTC 10195 / G37) (Mycoplasmoides genitalium).